Here is a 206-residue protein sequence, read N- to C-terminus: Small ribosomal subunit protein uS4 (206 aa).

The region spanning 98 to 161 (RRLDNVVYRL…RSMELIKNNL (64 aa)) is the S4 RNA-binding domain.

Belongs to the universal ribosomal protein uS4 family. In terms of assembly, part of the 30S ribosomal subunit. Contacts protein S5. The interaction surface between S4 and S5 is involved in control of translational fidelity.

Its function is as follows. One of the primary rRNA binding proteins, it binds directly to 16S rRNA where it nucleates assembly of the body of the 30S subunit. Functionally, with S5 and S12 plays an important role in translational accuracy. The sequence is that of Small ribosomal subunit protein uS4 from Caldanaerobacter subterraneus subsp. tengcongensis (strain DSM 15242 / JCM 11007 / NBRC 100824 / MB4) (Thermoanaerobacter tengcongensis).